The chain runs to 234 residues: Lipoprotein-releasing system ATP-binding protein LolD (234 aa).

An ABC transporter domain is found at 13–233 (IYLHEIKRQY…SLSDGQVVEL (221 aa)). 49 to 56 (APSGSGKS) serves as a coordination point for ATP.

This sequence belongs to the ABC transporter superfamily. Lipoprotein translocase (TC 3.A.1.125) family. The complex is composed of two ATP-binding proteins (LolD) and two transmembrane proteins (LolC and LolE).

It is found in the cell inner membrane. Part of the ABC transporter complex LolCDE involved in the translocation of mature outer membrane-directed lipoproteins, from the inner membrane to the periplasmic chaperone, LolA. Responsible for the formation of the LolA-lipoprotein complex in an ATP-dependent manner. This is Lipoprotein-releasing system ATP-binding protein LolD from Bradyrhizobium diazoefficiens (strain JCM 10833 / BCRC 13528 / IAM 13628 / NBRC 14792 / USDA 110).